The chain runs to 168 residues: DAZ-associated protein 2 (168 aa).

The span at 1–13 (MNSKGQYPTQPTY) shows a compositional bias: low complexity. Positions 1–25 (MNSKGQYPTQPTYPVQPPGNPVYPQ) are disordered. Positions 39–42 (PPAY) match the PPAY motif. S77 is subject to Phosphoserine.

Interacts with SOX6. Interacts with DAZ1 and DAZL. Interacts with IL17RB. May interact with FAM168B. Interacts with INCA1. Interacts with EIF4G1 and EIF4G2. Interacts (via PPAY motif) with NEDD4 (via WW domains). Interacts with transcription factor TCF4; the interaction results in localization of DAZAP2 to the nucleus. Interacts with transcription factors TCF7 and TCF7L1. Interacts with transcription factor LEF1. Interacts with serine/threonine-protein kinase HIPK2; the interaction results in phosphorylation of DAZAP2 which causes localization of DAZAP2 to the nucleus, reduces interaction of DAZAP2 with HIPK2 and prevents DAZAP2-dependent degradation of HIPK2. Interacts with ubiquitin ligase SIAH1; the interaction is decreased following phosphorylation of DAZAP2 by HIPK2. Interacts with TP53; the interaction is triggered by DNA damage. In terms of processing, ubiquitinated by SMURF2, leading to proteasomal degradation. Ubiquitinated by NEDD4, leading to proteasomal degradation. Following DNA damage, phosphorylated by HIPK2 which promotes DAZAP2 localization to the nucleus, reduces interaction of DAZAP2 with HIPK2 and SIAH1, and prevents DAZAP2-dependent ubiquitination of HIPK2 by E3 ubiquitin-protein ligase SIAH1 and subsequent HIPK2 proteasomal degradation.

The protein resides in the cytoplasm. It localises to the nucleus. It is found in the nucleus speckle. The protein localises to the nuclear body. Its subcellular location is the stress granule. Functionally, in unstressed cells, promotes SIAH1-mediated polyubiquitination and degradation of the serine/threonine-protein kinase HIPK2, probably by acting as a loading factor that potentiates complex formation between HIPK2 and ubiquitin ligase SIAH1. In response to DNA damage, localizes to the nucleus following phosphorylation by HIPK2 and modulates the expression of a subset of TP53/p53 target genes by binding to TP53 at target gene promoters. This limits the expression of a number of cell death-mediating TP53 target genes, reducing DNA damage-induced cell death. Enhances the binding of transcription factor TCF7L2/TCF4, a Wnt signaling pathway effector, to the promoters of target genes. Plays a role in stress granule formation. The polypeptide is DAZ-associated protein 2 (Rattus norvegicus (Rat)).